Reading from the N-terminus, the 203-residue chain is Histidine biosynthesis bifunctional protein HisIE (203 aa).

The interval 1–114 is phosphoribosyl-AMP cyclohydrolase; the sequence is MLTEQQRREL…FGDTAHQWLF (114 aa). A phosphoribosyl-ATP pyrophosphohydrolase region spans residues 115-203; it reads LYQLEQLLAE…VIENLRKRHQ (89 aa).

It in the N-terminal section; belongs to the PRA-CH family. This sequence in the C-terminal section; belongs to the PRA-PH family.

The protein resides in the cytoplasm. The enzyme catalyses 1-(5-phospho-beta-D-ribosyl)-ATP + H2O = 1-(5-phospho-beta-D-ribosyl)-5'-AMP + diphosphate + H(+). The catalysed reaction is 1-(5-phospho-beta-D-ribosyl)-5'-AMP + H2O = 1-(5-phospho-beta-D-ribosyl)-5-[(5-phospho-beta-D-ribosylamino)methylideneamino]imidazole-4-carboxamide. Its pathway is amino-acid biosynthesis; L-histidine biosynthesis; L-histidine from 5-phospho-alpha-D-ribose 1-diphosphate: step 2/9. It functions in the pathway amino-acid biosynthesis; L-histidine biosynthesis; L-histidine from 5-phospho-alpha-D-ribose 1-diphosphate: step 3/9. In Shigella sonnei (strain Ss046), this protein is Histidine biosynthesis bifunctional protein HisIE.